Consider the following 195-residue polypeptide: Imidazoleglycerol-phosphate dehydratase (195 aa).

Belongs to the imidazoleglycerol-phosphate dehydratase family.

It is found in the cytoplasm. The catalysed reaction is D-erythro-1-(imidazol-4-yl)glycerol 3-phosphate = 3-(imidazol-4-yl)-2-oxopropyl phosphate + H2O. Its pathway is amino-acid biosynthesis; L-histidine biosynthesis; L-histidine from 5-phospho-alpha-D-ribose 1-diphosphate: step 6/9. The sequence is that of Imidazoleglycerol-phosphate dehydratase from Parafrankia sp. (strain EAN1pec).